Reading from the N-terminus, the 594-residue chain is APOBEC1 complementation factor (594 aa).

RRM domains lie at 56 to 134, 136 to 218, and 231 to 303; these read CEIF…ASVD, CRLF…WAEP, and KILY…LAKP. Positions 359–408 are required for nuclear localization; the sequence is HFPATKGHLSNRALIRTPSVREIYMNVPVGAAGVRGLGGRGYLAYTGLGR. Thr-498 carries the phosphothreonine modification.

Part of the apolipoprotein B mRNA editing complex with APOBEC1. Interacts with TNPO2; TNPO2 may be responsible for transport of A1CF into the nucleus. Interacts with SYNCRIP. Interacts with CELF2/CUGBP2. Interacts with RBM47. Isoforms 1 and 2 are widely expressed while isoforms 3 and 4 are restricted to liver and small intestine.

Its subcellular location is the nucleus. It localises to the endoplasmic reticulum. The protein resides in the cytoplasm. Essential component of the apolipoprotein B mRNA editing enzyme complex which is responsible for the postranscriptional editing of a CAA codon for Gln to a UAA codon for stop in APOB mRNA. Binds to APOB mRNA and is probably responsible for docking the catalytic subunit, APOBEC1, to the mRNA to allow it to deaminate its target cytosine. The complex also seems to protect the edited APOB mRNA from nonsense-mediated decay. The polypeptide is APOBEC1 complementation factor (A1cf) (Rattus norvegicus (Rat)).